The following is a 520-amino-acid chain: 2-isopropylmalate synthase (520 aa).

Residues 12–274 form the Pyruvate carboxyltransferase domain; that stretch reads IRIFDTTLRD…DSAINTPRIV (263 aa). Positions 21, 209, 211, and 245 each coordinate Mn(2+). Positions 396–520 are regulatory domain; the sequence is RLASMTISDV…VVAGKTAAVA (125 aa).

This sequence belongs to the alpha-IPM synthase/homocitrate synthase family. LeuA type 1 subfamily. In terms of assembly, homodimer. Mn(2+) serves as cofactor.

It is found in the cytoplasm. It catalyses the reaction 3-methyl-2-oxobutanoate + acetyl-CoA + H2O = (2S)-2-isopropylmalate + CoA + H(+). The protein operates within amino-acid biosynthesis; L-leucine biosynthesis; L-leucine from 3-methyl-2-oxobutanoate: step 1/4. Catalyzes the condensation of the acetyl group of acetyl-CoA with 3-methyl-2-oxobutanoate (2-ketoisovalerate) to form 3-carboxy-3-hydroxy-4-methylpentanoate (2-isopropylmalate). The chain is 2-isopropylmalate synthase from Xanthomonas euvesicatoria pv. vesicatoria (strain 85-10) (Xanthomonas campestris pv. vesicatoria).